Here is a 574-residue protein sequence, read N- to C-terminus: Protein SIX6OS1 (574 aa).

The interval 259-313 (KDEQVSNRSSQNSQLLLPCESQKFVRNMNSSEARVTDKKEESSANQSKFVRSDVR) is disordered. Residues 264-275 (SNRSSQNSQLLL) show a composition bias toward low complexity. Position 427 is a phosphothreonine (Thr-427). A Phosphoserine modification is found at Ser-430. Positions 549–574 (QDPSTMTSSSSKDFSSSQNKTQFMFF) are disordered. Over residues 552–565 (STMTSSSSKDFSSS) the composition is skewed to low complexity.

Interacts with SYCE1. Interacts with proteasome subunit PSMA8; to participate in meiosis progression during spermatogenesis. In terms of tissue distribution, most abundantly expressed in testis. Also expressed in retina and skeletal muscle.

It localises to the chromosome. Functionally, meiotic protein that localizes to the central element of the synaptonemal complex and is required for chromosome synapsis during meiotic recombination. Required for the appropriate processing of intermediate recombination nodules before crossover formation. The sequence is that of Protein SIX6OS1 (Six6os1) from Mus musculus (Mouse).